The following is a 500-amino-acid chain: Cobyric acid synthase (500 aa).

The GATase cobBQ-type domain maps to 255–444; it reads AIDIAVIRCP…MHDLFHNDAF (190 aa). The Nucleophile role is filled by cysteine 337. Histidine 436 is a catalytic residue.

Belongs to the CobB/CobQ family. CobQ subfamily.

It functions in the pathway cofactor biosynthesis; adenosylcobalamin biosynthesis. Its function is as follows. Catalyzes amidations at positions B, D, E, and G on adenosylcobyrinic A,C-diamide. NH(2) groups are provided by glutamine, and one molecule of ATP is hydrogenolyzed for each amidation. This Geobacillus thermodenitrificans (strain NG80-2) protein is Cobyric acid synthase.